The chain runs to 328 residues: Ferredoxin--NADP reductase 2 (328 aa).

Residues Thr-16, Glu-35, Gln-43, Tyr-48, Ile-88, Phe-123, Asp-284, and Thr-325 each coordinate FAD.

The protein belongs to the ferredoxin--NADP reductase type 2 family. Homodimer. FAD serves as cofactor.

It catalyses the reaction 2 reduced [2Fe-2S]-[ferredoxin] + NADP(+) + H(+) = 2 oxidized [2Fe-2S]-[ferredoxin] + NADPH. The chain is Ferredoxin--NADP reductase 2 from Oceanobacillus iheyensis (strain DSM 14371 / CIP 107618 / JCM 11309 / KCTC 3954 / HTE831).